The primary structure comprises 59 residues: MAVQQNKKSPSKRGMHRSHDFLTTAPIAVEPTTGEVHLRHHVSPNGYYRGRKVVKTKND.

The tract at residues 1-59 (MAVQQNKKSPSKRGMHRSHDFLTTAPIAVEPTTGEVHLRHHVSPNGYYRGRKVVKTKND) is disordered. Over residues 49–59 (RGRKVVKTKND) the composition is skewed to basic residues.

The protein belongs to the bacterial ribosomal protein bL32 family.

The polypeptide is Large ribosomal subunit protein bL32 (Ralstonia pickettii (strain 12J)).